Reading from the N-terminus, the 1665-residue chain is Mediator of RNA polymerase II transcription subunit 13 (1665 aa).

Disordered regions lie at residues 411 to 460 (KETE…IDKN), 482 to 512 (INLD…ETKP), 551 to 580 (TVSQ…GTET), and 673 to 781 (LDSS…NQIS). Residues 415–445 (PENESENDMEIDDLFGGDESDDNDDLEEAGN) show a composition bias toward acidic residues. The span at 499-512 (VPDKENFKPKETKP) shows a compositional bias: basic and acidic residues. A compositionally biased stretch (low complexity) spans 551-568 (TVSQSAVTTNPPSVGSAP). Residues 682-720 (EGGEDIEDDDNDYEDEGDDDEEEEGEEEEEEESDEDEIS) show a composition bias toward acidic residues. Positions 728–762 (LKLNTQNESVPPQQSNYNPVNITDSGSNTTNNITD) are enriched in polar residues.

The protein belongs to the Mediator complex subunit 13 family. In terms of assembly, component of the SRB8-11 complex, which itself associates with the Mediator complex.

The protein localises to the nucleus. Its function is as follows. Component of the SRB8-11 complex. The SRB8-11 complex is a regulatory module of the Mediator complex which is itself involved in regulation of basal and activated RNA polymerase II-dependent transcription. The SRB8-11 complex may be involved in the transcriptional repression of a subset of genes regulated by Mediator. It may inhibit the association of the Mediator complex with RNA polymerase II to form the holoenzyme complex. The polypeptide is Mediator of RNA polymerase II transcription subunit 13 (SSN2) (Candida albicans (strain SC5314 / ATCC MYA-2876) (Yeast)).